Here is a 1112-residue protein sequence, read N- to C-terminus: Constitutive coactivator of PPAR-gamma-like protein 1 (1112 aa).

The interval 339–403 is interaction with YES1, SRC and FYN; that stretch reads PPHYLARPNP…YSLSEPALTL (65 aa). The tract at residues 372 to 525 is disordered; the sequence is QAKPAVPQVP…GKGSHMGTVQ (154 aa). Polar residues-rich tracts occupy residues 403–418 and 433–445; these read LDTS…SYSN and SPIN…SPNH. The span at 479-500 shows a compositional bias: basic and acidic residues; the sequence is GWEKTGSHAEPLARGDPGDQVK. Over residues 503-512 the composition is skewed to polar residues; that stretch reads GSSTASSGSQ. At T653 the chain carries Phosphothreonine. Positions 827–1112 are RNA binding; that stretch reads AEQAAKVEKM…LEAAVLNKEE (286 aa). An omega-N-methylarginine mark is found at R871, R882, and R884. Residues 919–943 are disordered; the sequence is AFSGSDSSRTSKSQGGVQPIPSQGG. The segment covering 922–934 has biased composition (polar residues); sequence GSDSSRTSKSQGG. At K930 the chain carries N6-acetyllysine. Position 958 is a phosphoserine (S958). Omega-N-methylarginine is present on residues R980 and R984. A phosphoserine mark is found at S1021 and S1042. The segment at 1030-1090 is disordered; the sequence is KSKSGESKSS…PCNTNPHLNA (61 aa). A compositionally biased stretch (polar residues) spans 1070 to 1090; the sequence is HSESALNNDSKPCNTNPHLNA.

It belongs to the constitutive coactivator of PPAR-gamma family. Interacts with PURA. Interacts with SRC family protein kinases YES1, SRC and FYN. Upon tyrosine phosphorylation, interacts with PIK3R1. Interacts with IGF2BP1/IMP-1 in an RNA-dependent manner. Post-translationally, arg-980 is dimethylated, probably to asymmetric dimethylarginine. Phosphorylated on tyrosine by src family kinases upon ultraviolet exposure. As to expression, in the brain, predominantly expressed in the hippocampus, caudate putamen, cerebral cortex and cerebellum. Expression is restricted to neurons (at protein level).

The protein resides in the cytoplasm. It localises to the cell membrane. In terms of biological role, component of the oxidative stress-induced survival signaling. May regulate the activation of SRC family protein kinases. May act as a scaffolding protein enabling SRC family protein kinases to phosphorylate and activate PI3-kinase. Binds IGF2 RNA and promotes the production of IGF2 protein. The sequence is that of Constitutive coactivator of PPAR-gamma-like protein 1 (FAM120A) from Mus musculus (Mouse).